The sequence spans 29 residues: Dermaseptin-J6 (29 aa).

Val29 carries the post-translational modification Valine amide.

As to expression, expressed by the skin glands.

Its subcellular location is the secreted. Functionally, has antimicrobial activity. The polypeptide is Dermaseptin-J6 (Phasmahyla jandaia (Jandaia leaf frog)).